The sequence spans 702 residues: Polyribonucleotide nucleotidyltransferase (702 aa).

Mg(2+) is bound by residues Asp-487 and Asp-493. In terms of domain architecture, KH spans 554–613 (PRLLTIKIHPDKIREVIGKGGSTIQAITKETGTQIDIQDDGTIVIASVNAIAAQAAKARI). The 69-residue stretch at 623-691 (GRIYEGKVAK…KQGRIRLSMK (69 aa)) folds into the S1 motif domain.

It belongs to the polyribonucleotide nucleotidyltransferase family. Component of the RNA degradosome, which is a multiprotein complex involved in RNA processing and mRNA degradation. Requires Mg(2+) as cofactor.

It localises to the cytoplasm. It catalyses the reaction RNA(n+1) + phosphate = RNA(n) + a ribonucleoside 5'-diphosphate. Its function is as follows. Involved in mRNA degradation. Catalyzes the phosphorolysis of single-stranded polyribonucleotides processively in the 3'- to 5'-direction. The chain is Polyribonucleotide nucleotidyltransferase from Stenotrophomonas maltophilia (strain K279a).